The following is a 418-amino-acid chain: D-amino acid dehydrogenase 1 (418 aa).

3–17 (IMVLGGGVIGVTTAY) contacts FAD.

The protein belongs to the DadA oxidoreductase family. The cofactor is FAD.

The catalysed reaction is a D-alpha-amino acid + A + H2O = a 2-oxocarboxylate + AH2 + NH4(+). It functions in the pathway amino-acid degradation; D-alanine degradation; NH(3) and pyruvate from D-alanine: step 1/1. In terms of biological role, oxidative deamination of D-amino acids. The sequence is that of D-amino acid dehydrogenase 1 (dadA1) from Mesorhizobium japonicum (strain LMG 29417 / CECT 9101 / MAFF 303099) (Mesorhizobium loti (strain MAFF 303099)).